Here is a 247-residue protein sequence, read N- to C-terminus: Mycofactocin precursor peptide peptidase (247 aa).

The a divalent metal cation site is built by E38, H40, D49, H124, and E163.

It belongs to the creatininase superfamily. Homooctamer. Fe(2+) serves as cofactor. Zn(2+) is required as a cofactor.

It catalyses the reaction [mycofactocin precursor peptide]-C-terminal glycyl-N-{5-[(4-hydroxyphenyl)methyl]-4,4-dimethyl-2-oxopyrrolidin-3-yl}acetamide + H2O = [mycofactocin precursor peptide]-C-terminal glycine + 3-amino-5-[(4-hydroxyphenyl)methyl]-4,4-dimethyl-2-pyrrolidin-2-one. Its function is as follows. Peptidase involved in the biosynthesis of the enzyme cofactor mycofactocin (MFT). Catalyzes cleavage of the MftC-modified MftA peptide to liberate its final two residues, which consist of a cross-linked valine-decarboxylated tyrosine dipeptide (named 3-amino-5-[(4-hydroxyphenyl)methyl]-4,4-dimethyl-2-pyrrolidin-2-one or ADHP). Is required for the in vivo ethanol assimilation in M.smegmatis. The sequence is that of Mycofactocin precursor peptide peptidase from Mycolicibacterium smegmatis (strain ATCC 700084 / mc(2)155) (Mycobacterium smegmatis).